The sequence spans 327 residues: GMP reductase (327 aa).

Cys-175 (thioimidate intermediate) is an active-site residue. 204 to 227 (IIADGGIRTHGDVAKSIRFGATMV) serves as a coordination point for NADP(+).

This sequence belongs to the IMPDH/GMPR family. GuaC type 2 subfamily.

It catalyses the reaction IMP + NH4(+) + NADP(+) = GMP + NADPH + 2 H(+). In terms of biological role, catalyzes the irreversible NADPH-dependent deamination of GMP to IMP. It functions in the conversion of nucleobase, nucleoside and nucleotide derivatives of G to A nucleotides, and in maintaining the intracellular balance of A and G nucleotides. In Bacillus cereus (strain ATCC 10987 / NRS 248), this protein is GMP reductase.